Here is a 227-residue protein sequence, read N- to C-terminus: Small ribosomal subunit protein uS3 (227 aa).

A KH type-2 domain is found at 39 to 108 (IRKFIEERYK…EVIVNVDEVK (70 aa)).

It belongs to the universal ribosomal protein uS3 family. Part of the 30S ribosomal subunit. Forms a tight complex with proteins S10 and S14.

Functionally, binds the lower part of the 30S subunit head. Binds mRNA in the 70S ribosome, positioning it for translation. The protein is Small ribosomal subunit protein uS3 of Sulfurihydrogenibium sp. (strain YO3AOP1).